Consider the following 411-residue polypeptide: Formate-dependent phosphoribosylglycinamide formyltransferase (411 aa).

25–26 serves as a coordination point for N(1)-(5-phospho-beta-D-ribosyl)glycinamide; that stretch reads EL. ATP contacts are provided by residues Arg118, Lys159, 164 to 169, 199 to 202, and Glu207; these read SSGAGQ and EQYI. The 196-residue stretch at 123 to 318 folds into the ATP-grasp domain; that stretch reads TFAHDKLGLP…EFDLHARAIL (196 aa). Mg(2+) is bound by residues Glu277 and Glu289. N(1)-(5-phospho-beta-D-ribosyl)glycinamide contacts are provided by residues Asp296, Lys366, and 373 to 374; that span reads RR.

This sequence belongs to the PurK/PurT family. In terms of assembly, homodimer.

The enzyme catalyses N(1)-(5-phospho-beta-D-ribosyl)glycinamide + formate + ATP = N(2)-formyl-N(1)-(5-phospho-beta-D-ribosyl)glycinamide + ADP + phosphate + H(+). The protein operates within purine metabolism; IMP biosynthesis via de novo pathway; N(2)-formyl-N(1)-(5-phospho-D-ribosyl)glycinamide from N(1)-(5-phospho-D-ribosyl)glycinamide (formate route): step 1/1. Functionally, involved in the de novo purine biosynthesis. Catalyzes the transfer of formate to 5-phospho-ribosyl-glycinamide (GAR), producing 5-phospho-ribosyl-N-formylglycinamide (FGAR). Formate is provided by PurU via hydrolysis of 10-formyl-tetrahydrofolate. This is Formate-dependent phosphoribosylglycinamide formyltransferase from Corynebacterium jeikeium (strain K411).